The sequence spans 276 residues: Protease HtpX homolog (276 aa).

A helical transmembrane segment spans residues 14–34 (IVLFALIGQALGGTGGMLLAF). His-130 provides a ligand contact to Zn(2+). The active site involves Glu-131. His-134 serves as a coordination point for Zn(2+). 2 helical membrane passes run 145–165 (VAAT…FFGG) and 171–191 (LVSL…QSAI). Glu-196 lines the Zn(2+) pocket.

Belongs to the peptidase M48B family. Requires Zn(2+) as cofactor.

Its subcellular location is the cell inner membrane. The polypeptide is Protease HtpX homolog (Salinibacter ruber (strain DSM 13855 / M31)).